A 346-amino-acid chain; its full sequence is Protein RecA (346 aa).

Residue 68-75 (GPESSGKT) coordinates ATP.

This sequence belongs to the RecA family.

The protein localises to the cytoplasm. Can catalyze the hydrolysis of ATP in the presence of single-stranded DNA, the ATP-dependent uptake of single-stranded DNA by duplex DNA, and the ATP-dependent hybridization of homologous single-stranded DNAs. It interacts with LexA causing its activation and leading to its autocatalytic cleavage. The sequence is that of Protein RecA from Heliobacterium modesticaldum (strain ATCC 51547 / Ice1).